Here is a 189-residue protein sequence, read N- to C-terminus: ATP synthase subunit b (189 aa).

Residues Ile23–Val43 form a helical membrane-spanning segment.

It belongs to the ATPase B chain family. As to quaternary structure, F-type ATPases have 2 components, F(1) - the catalytic core - and F(0) - the membrane proton channel. F(1) has five subunits: alpha(3), beta(3), gamma(1), delta(1), epsilon(1). F(0) has three main subunits: a(1), b(2) and c(10-14). The alpha and beta chains form an alternating ring which encloses part of the gamma chain. F(1) is attached to F(0) by a central stalk formed by the gamma and epsilon chains, while a peripheral stalk is formed by the delta and b chains.

It is found in the cell membrane. Functionally, f(1)F(0) ATP synthase produces ATP from ADP in the presence of a proton or sodium gradient. F-type ATPases consist of two structural domains, F(1) containing the extramembraneous catalytic core and F(0) containing the membrane proton channel, linked together by a central stalk and a peripheral stalk. During catalysis, ATP synthesis in the catalytic domain of F(1) is coupled via a rotary mechanism of the central stalk subunits to proton translocation. Its function is as follows. Component of the F(0) channel, it forms part of the peripheral stalk, linking F(1) to F(0). The sequence is that of ATP synthase subunit b from Nocardioides sp. (strain ATCC BAA-499 / JS614).